A 356-amino-acid polypeptide reads, in one-letter code: tRNA-specific 2-thiouridylase MnmA 1 (356 aa).

ATP-binding positions include G8 to S15 and M34. The Nucleophile role is filled by C103. An intrachain disulfide couples C103 to C199. G127 contributes to the ATP binding site. An interaction with tRNA region spans residues K149–Q151. The active-site Cysteine persulfide intermediate is C199. An interaction with tRNA region spans residues R305–Y306.

The protein belongs to the MnmA/TRMU family.

Its subcellular location is the cytoplasm. The catalysed reaction is S-sulfanyl-L-cysteinyl-[protein] + uridine(34) in tRNA + AH2 + ATP = 2-thiouridine(34) in tRNA + L-cysteinyl-[protein] + A + AMP + diphosphate + H(+). Functionally, catalyzes the 2-thiolation of uridine at the wobble position (U34) of tRNA, leading to the formation of s(2)U34. This chain is tRNA-specific 2-thiouridylase MnmA 1, found in Clostridium botulinum (strain ATCC 19397 / Type A).